We begin with the raw amino-acid sequence, 200 residues long: MNDRMVWIDCEMTGLSLSDDALIEVAALVTDSELNVLGEGVDIVIRPPDAALETMPEVVRTMHTASGLLDELAAGTTLADAEAQVLAYVREHVKEPGKAPLCGNSVGTDRGFLARDMSALETYLHYRIVDVSSVKELARRWYPRAYFNSPEKSGNHRALADIRESIAELRYYREAIFVPQPGPDSETARTIAAKHVLPAQ.

An Exonuclease domain is found at 5–169; that stretch reads MVWIDCEMTG…ADIRESIAEL (165 aa). Y126 is an active-site residue.

The protein belongs to the oligoribonuclease family.

Its subcellular location is the cytoplasm. Functionally, 3'-to-5' exoribonuclease specific for small oligoribonucleotides. This chain is Oligoribonuclease, found in Streptomyces avermitilis (strain ATCC 31267 / DSM 46492 / JCM 5070 / NBRC 14893 / NCIMB 12804 / NRRL 8165 / MA-4680).